A 321-amino-acid chain; its full sequence is Beta-1,3-N-acetylglucosaminyltransferase manic fringe (321 aa).

The Cytoplasmic segment spans residues methionine 1–arginine 7. Residues glycine 8–histidine 27 form a helical; Signal-anchor for type II membrane protein membrane-spanning segment. Topologically, residues leucine 28 to arginine 321 are lumenal. Arginine 70 is a binding site for substrate. N-linked (GlcNAc...) asparagine glycosylation is present at asparagine 109. 2 disulfides stabilise this stretch: cysteine 110–cysteine 121 and cysteine 139–cysteine 202. Aspartate 143 contacts substrate. Aspartate 144 serves as a coordination point for Mn(2+). The N-linked (GlcNAc...) asparagine glycan is linked to asparagine 185. The active site involves aspartate 232. Histidine 256 contacts Mn(2+). The cysteines at positions 306 and 315 are disulfide-linked.

It belongs to the glycosyltransferase 31 family. The cofactor is Mn(2+).

The protein resides in the golgi apparatus membrane. The catalysed reaction is 3-O-(alpha-L-fucosyl)-L-threonyl-[EGF-like domain protein] + UDP-N-acetyl-alpha-D-glucosamine = 3-O-(N-acetyl-beta-D-glucosaminyl-(1-&gt;3)-alpha-L-fucosyl)-L-threonyl-[EGF-like domain protein] + UDP + H(+). It catalyses the reaction 3-O-(alpha-L-fucosyl)-L-seryl-[EGF-like domain protein] + UDP-N-acetyl-alpha-D-glucosamine = 3-O-(N-acetyl-beta-D-glucosaminyl-(1-&gt;3)-alpha-L-fucosyl)-L-seryl-[EGF-like domain protein] + UDP + H(+). Its function is as follows. Glycosyltransferase that initiates the elongation of O-linked fucose residues attached to EGF-like repeats in the extracellular domain of Notch molecules. Modulates NOTCH1 activity by modifying O-fucose residues at specific EGF-like domains resulting in inhibition of NOTCH1 activation by JAG1 and enhancement of NOTCH1 activation by DLL1 via an increase in its binding to DLL1. The polypeptide is Beta-1,3-N-acetylglucosaminyltransferase manic fringe (Homo sapiens (Human)).